The chain runs to 91 residues: Small ribosomal subunit protein bS20 (91 aa).

The protein belongs to the bacterial ribosomal protein bS20 family.

Functionally, binds directly to 16S ribosomal RNA. This chain is Small ribosomal subunit protein bS20, found in Thermosipho melanesiensis (strain DSM 12029 / CIP 104789 / BI429).